The chain runs to 379 residues: Homoserine O-succinyltransferase (379 aa).

The region spanning 51-360 is the AB hydrolase-1 domain; that stretch reads NAVLICHALS…DSPYGHDAFL (310 aa). The active-site Nucleophile is Ser-157. Arg-227 lines the substrate pocket. Active-site residues include Asp-323 and His-356. Residue Asp-357 coordinates substrate.

Belongs to the AB hydrolase superfamily. MetX family. In terms of assembly, homodimer.

It localises to the cytoplasm. It carries out the reaction L-homoserine + succinyl-CoA = O-succinyl-L-homoserine + CoA. Its pathway is amino-acid biosynthesis; L-methionine biosynthesis via de novo pathway; O-succinyl-L-homoserine from L-homoserine: step 1/1. In terms of biological role, transfers a succinyl group from succinyl-CoA to L-homoserine, forming succinyl-L-homoserine. The chain is Homoserine O-succinyltransferase from Pseudomonas entomophila (strain L48).